Consider the following 380-residue polypeptide: Cytochrome b (380 aa).

A run of 4 helical transmembrane segments spans residues F34–M54, W78–I99, W114–L134, and F179–T199. Heme b-binding residues include H84 and H98. 2 residues coordinate heme b: H183 and H197. Position 202 (H202) interacts with a ubiquinone. Transmembrane regions (helical) follow at residues L227–S247, L289–H309, L321–S341, and F348–P368.

The protein belongs to the cytochrome b family. As to quaternary structure, the cytochrome bc1 complex contains 11 subunits: 3 respiratory subunits (MT-CYB, CYC1 and UQCRFS1), 2 core proteins (UQCRC1 and UQCRC2) and 6 low-molecular weight proteins (UQCRH/QCR6, UQCRB/QCR7, UQCRQ/QCR8, UQCR10/QCR9, UQCR11/QCR10 and a cleavage product of UQCRFS1). This cytochrome bc1 complex then forms a dimer. Requires heme b as cofactor.

It localises to the mitochondrion inner membrane. Its function is as follows. Component of the ubiquinol-cytochrome c reductase complex (complex III or cytochrome b-c1 complex) that is part of the mitochondrial respiratory chain. The b-c1 complex mediates electron transfer from ubiquinol to cytochrome c. Contributes to the generation of a proton gradient across the mitochondrial membrane that is then used for ATP synthesis. This Polyplectron bicalcaratum (Grey peacock-pheasant) protein is Cytochrome b (MT-CYB).